The chain runs to 226 residues: Thiamine-phosphate synthase (226 aa).

Residues 46–50 (QFRDK) and Asp83 each bind 4-amino-2-methyl-5-(diphosphooxymethyl)pyrimidine. Mg(2+)-binding residues include Asp84 and Asp103. Residue Ser122 participates in 4-amino-2-methyl-5-(diphosphooxymethyl)pyrimidine binding. 149–151 (TQS) provides a ligand contact to 2-[(2R,5Z)-2-carboxy-4-methylthiazol-5(2H)-ylidene]ethyl phosphate. Position 152 (Lys152) interacts with 4-amino-2-methyl-5-(diphosphooxymethyl)pyrimidine. 2-[(2R,5Z)-2-carboxy-4-methylthiazol-5(2H)-ylidene]ethyl phosphate-binding positions include Gly181 and 201-202 (IT).

The protein belongs to the thiamine-phosphate synthase family. Mg(2+) serves as cofactor.

It catalyses the reaction 2-[(2R,5Z)-2-carboxy-4-methylthiazol-5(2H)-ylidene]ethyl phosphate + 4-amino-2-methyl-5-(diphosphooxymethyl)pyrimidine + 2 H(+) = thiamine phosphate + CO2 + diphosphate. It carries out the reaction 2-(2-carboxy-4-methylthiazol-5-yl)ethyl phosphate + 4-amino-2-methyl-5-(diphosphooxymethyl)pyrimidine + 2 H(+) = thiamine phosphate + CO2 + diphosphate. The catalysed reaction is 4-methyl-5-(2-phosphooxyethyl)-thiazole + 4-amino-2-methyl-5-(diphosphooxymethyl)pyrimidine + H(+) = thiamine phosphate + diphosphate. Its pathway is cofactor biosynthesis; thiamine diphosphate biosynthesis; thiamine phosphate from 4-amino-2-methyl-5-diphosphomethylpyrimidine and 4-methyl-5-(2-phosphoethyl)-thiazole: step 1/1. Its function is as follows. Condenses 4-methyl-5-(beta-hydroxyethyl)thiazole monophosphate (THZ-P) and 2-methyl-4-amino-5-hydroxymethyl pyrimidine pyrophosphate (HMP-PP) to form thiamine monophosphate (TMP). The protein is Thiamine-phosphate synthase of Haemophilus influenzae (strain 86-028NP).